Reading from the N-terminus, the 258-residue chain is Ribosomal RNA small subunit methyltransferase A (258 aa).

Residues H13, L15, G40, E61, D86, and N106 each coordinate S-adenosyl-L-methionine.

This sequence belongs to the class I-like SAM-binding methyltransferase superfamily. rRNA adenine N(6)-methyltransferase family. RsmA subfamily.

It is found in the cytoplasm. The enzyme catalyses adenosine(1518)/adenosine(1519) in 16S rRNA + 4 S-adenosyl-L-methionine = N(6)-dimethyladenosine(1518)/N(6)-dimethyladenosine(1519) in 16S rRNA + 4 S-adenosyl-L-homocysteine + 4 H(+). In terms of biological role, specifically dimethylates two adjacent adenosines (A1518 and A1519) in the loop of a conserved hairpin near the 3'-end of 16S rRNA in the 30S particle. May play a critical role in biogenesis of 30S subunits. This is Ribosomal RNA small subunit methyltransferase A from Coxiella burnetii (strain CbuG_Q212) (Coxiella burnetii (strain Q212)).